The chain runs to 1788 residues: Protein TIC 214 (1788 aa).

6 helical membrane passes run 25–45 (IINS…FSIG), 70–90 (IGFI…PLHL), 95–115 (PHTI…WNNH), 132–152 (LNIQ…HFIL), 180–200 (VGWL…LFWI), and 223–243 (IFSI…PSPL). Disordered regions lie at residues 248–297 (LKKT…EEKE) and 1482–1526 (DLEN…DFDR). Basic and acidic residues-rich tracts occupy residues 253 to 277 (KREE…EKGT) and 1513 to 1526 (PLKK…DFDR).

It belongs to the TIC214 family. Part of the Tic complex.

The protein resides in the plastid. The protein localises to the chloroplast inner membrane. In terms of biological role, involved in protein precursor import into chloroplasts. May be part of an intermediate translocation complex acting as a protein-conducting channel at the inner envelope. In Ranunculus macranthus (Large buttercup), this protein is Protein TIC 214.